Reading from the N-terminus, the 146-residue chain is Ecotin-like protein 1 (146 aa).

The protein belongs to the protease inhibitor I11 (ecotin) family.

The chain is Ecotin-like protein 1 (ISP1) from Leishmania major.